The chain runs to 244 residues: Glucosamine-6-phosphate deaminase (244 aa).

Aspartate 67 functions as the Proton acceptor; for enolization step in the catalytic mechanism. The For ring-opening step role is filled by asparagine 136. Histidine 138 serves as the catalytic Proton acceptor; for ring-opening step. The active-site For ring-opening step is glutamate 143.

This sequence belongs to the glucosamine/galactosamine-6-phosphate isomerase family. NagB subfamily.

The catalysed reaction is alpha-D-glucosamine 6-phosphate + H2O = beta-D-fructose 6-phosphate + NH4(+). Its pathway is amino-sugar metabolism; N-acetylneuraminate degradation; D-fructose 6-phosphate from N-acetylneuraminate: step 5/5. Its function is as follows. Catalyzes the reversible isomerization-deamination of glucosamine 6-phosphate (GlcN6P) to form fructose 6-phosphate (Fru6P) and ammonium ion. This chain is Glucosamine-6-phosphate deaminase, found in Clostridium botulinum (strain 657 / Type Ba4).